We begin with the raw amino-acid sequence, 2266 residues long: Little elongation complex subunit 1 (2266 aa).

A coiled-coil region spans residues Cys-23–His-186. Disordered regions lie at residues Gly-223–Thr-259 and Pro-517–Leu-540. Over residues Pro-250–Thr-259 the composition is skewed to polar residues. Phosphoserine occurs at positions 255, 533, 558, and 589. The interval Glu-591–Gly-623 is disordered. The span at Pro-608–Asp-617 shows a compositional bias: acidic residues. At Ser-707 the chain carries Phosphoserine. Thr-832 is subject to Phosphothreonine. Ser-925 is subject to Phosphoserine. The interval Ser-925 to Ser-955 is disordered. Over residues Pro-940–Ser-955 the composition is skewed to polar residues. At Ser-958 the chain carries Phosphoserine. Disordered regions lie at residues Val-977–Glu-1001 and Thr-1107–Leu-1133. Positions Gln-984–His-998 are enriched in polar residues. Lys-1218 carries the N6-acetyllysine modification. Disordered regions lie at residues Thr-1295–Leu-1372, Ala-1467–Leu-1510, and Asn-1543–Glu-1707. Polar residues-rich tracts occupy residues Arg-1306–Thr-1319, Glu-1328–Ser-1344, Asn-1487–Phe-1505, Asn-1565–Ser-1588, and Thr-1594–Leu-1605. Ser-1588 is subject to Phosphoserine. 2 stretches are compositionally biased toward low complexity: residues Asp-1609 to Thr-1620 and Ala-1637 to Pro-1671. Residue Ser-1617 is modified to Phosphoserine. At Thr-1642 the chain carries Phosphothreonine. Ser-1692, Ser-1697, Ser-1699, Ser-1701, Ser-1712, Ser-1838, and Ser-1854 each carry phosphoserine. The disordered stretch occupies residues Thr-1809 to Leu-1902. Over residues Leu-1825–Arg-1843 the composition is skewed to polar residues. Positions Cys-1889 to Pro-1901 are enriched in polar residues. At Ser-1903 the chain carries Phosphoserine.

The protein belongs to the ICE1 family. In terms of assembly, component of the little elongation complex (LEC), at least composed of ELL (ELL, ELL2 or ELL3), ZC3H8, ICE1 and ICE2. Interacts (via N-terminus domain) with ELL. Interacts (via C-terminus domain) with ICE2 and ZC3H8.

The protein localises to the nucleus. It is found in the cajal body. Component of the little elongation complex (LEC), a complex required to regulate small nuclear RNA (snRNA) gene transcription by RNA polymerase II and III. Specifically acts as a scaffold protein that promotes the LEC complex formation and recruitment and RNA polymerase II occupancy at snRNA genes in subnuclear bodies. The sequence is that of Little elongation complex subunit 1 (ICE1) from Homo sapiens (Human).